A 498-amino-acid chain; its full sequence is Angiopoietin-1 (498 aa).

The signal sequence occupies residues 1–19; it reads MTVFLSFAFLAAILTHIGC. Asn92, Asn122, Asn154, Asn243, and Asn295 each carry an N-linked (GlcNAc...) asparagine glycan. A coiled-coil region spans residues 158–254; it reads RLEIQLLENS…SVLQKQQLEL (97 aa). The Fibrinogen C-terminal domain maps to 277–497; that stretch reads KEEVKPFRDC…STTMMIRPLD (221 aa). 2 cysteine pairs are disulfide-bonded: Cys286–Cys315 and Cys439–Cys452.

Homooligomer. Interacts with TEK/TIE2. Interacts with SVEP1/polydom. Interacts with THBD; this interaction significantly inhibits the generation of activated PC and TAFIa/CPB2 by the thrombin/thrombomodulin complex.

It localises to the secreted. Its function is as follows. Binds and activates TIE2 receptor by inducing its tyrosine phosphorylation. Implicated in endothelial developmental processes later and distinct from that of VEGF. Appears to play a crucial role in mediating reciprocal interactions between the endothelium and surrounding matrix and mesenchyme. Mediates blood vessel maturation/stability. It may play an important role in the heart early development. In Sus scrofa (Pig), this protein is Angiopoietin-1 (ANGPT1).